The following is a 143-amino-acid chain: Transcriptional regulator MraZ (143 aa).

2 SpoVT-AbrB domains span residues 5–47 and 76–119; these read TYTP…PRAE and TDEQ…DAAA.

It belongs to the MraZ family. Forms oligomers.

It localises to the cytoplasm. Its subcellular location is the nucleoid. This is Transcriptional regulator MraZ from Mycobacterium sp. (strain JLS).